Consider the following 257-residue polypeptide: Type 2 phosphatidylinositol 4,5-bisphosphate 4-phosphatase (257 aa).

Basic and acidic residues predominate over residues Met1 to Ser10. A disordered region spans residues Met1–Pro34. Polar residues predominate over residues Leu13–Pro23. Thr22 carries the phosphothreonine modification. Ser33 carries the phosphoserine modification. Cys107 is a catalytic residue. A CX5R motif motif is present at residues Cys107–Arg113. A run of 2 helical transmembrane segments spans residues Cys192–Gly212 and Trp227–Ile247.

It localises to the late endosome membrane. It is found in the lysosome membrane. Its subcellular location is the cytoplasmic vesicle. The protein localises to the phagosome membrane. The protein resides in the cell membrane. The catalysed reaction is a 1,2-diacyl-sn-glycero-3-phospho-(1D-myo-inositol-4,5-bisphosphate) + H2O = a 1,2-diacyl-sn-glycero-3-phospho-(1D-myo-inositol-5-phosphate) + phosphate. In terms of biological role, catalyzes the hydrolysis of phosphatidylinositol-4,5-bisphosphate (PtdIns-4,5-P2) to phosphatidylinositol-4-phosphate (PtdIns-4-P). Does not hydrolyze phosphatidylinositol 3,4,5-trisphosphate, phosphatidylinositol 3,4-bisphosphate, inositol 3,5-bisphosphate, inositol 3,4-bisphosphate, phosphatidylinositol 5-monophosphate, phosphatidylinositol 4-monophosphate and phosphatidylinositol 3-monophosphate. Negatively regulates the phagocytosis of large particles by reducing phagosomal phosphatidylinositol 4,5-bisphosphate accumulation during cup formation. The sequence is that of Type 2 phosphatidylinositol 4,5-bisphosphate 4-phosphatase from Bos taurus (Bovine).